We begin with the raw amino-acid sequence, 350 residues long: Heme A synthase (350 aa).

Helical transmembrane passes span 16–36, 77–97, 101–121, 136–156, 170–190, 201–221, 265–285, and 299–321; these read LARW…VGGI, FQLV…IFFW, HRLL…WFWI, LLAL…SGIV, LLVA…LVAL, GIGL…ALVA, VFLV…VLVV, and IVLH…SGVA. His272 is a binding site for heme. A heme-binding site is contributed by His328.

Belongs to the COX15/CtaA family. Type 2 subfamily. In terms of assembly, interacts with CtaB. It depends on heme b as a cofactor.

It localises to the cell membrane. It catalyses the reaction Fe(II)-heme o + 2 A + H2O = Fe(II)-heme a + 2 AH2. Its pathway is porphyrin-containing compound metabolism; heme A biosynthesis; heme A from heme O: step 1/1. Catalyzes the conversion of heme O to heme A by two successive hydroxylations of the methyl group at C8. The first hydroxylation forms heme I, the second hydroxylation results in an unstable dihydroxymethyl group, which spontaneously dehydrates, resulting in the formyl group of heme A. The polypeptide is Heme A synthase (Novosphingobium aromaticivorans (strain ATCC 700278 / DSM 12444 / CCUG 56034 / CIP 105152 / NBRC 16084 / F199)).